Here is a 711-residue protein sequence, read N- to C-terminus: L-type lectin-domain containing receptor kinase VIII.2 (711 aa).

Positions 1 to 30 (MLKLPPRFFSVYSTLIHILASFLCSSDVRG) are cleaved as a signal peptide. Residues 31–315 (DFPATRFDLG…NKLCKKSPAA (285 aa)) are Extracellular-facing. Residues 35–260 (TRFDLGTLTL…IHSVDWWSFS (226 aa)) are legume-lectin like. Asn-57 is a glycosylation site (N-linked (GlcNAc...) asparagine). The segment at 265–306 (ESSESPPPMPNSPPPSSPSSSITPSLSTVRRKTADPSSSCRN) is disordered. Residues 269–281 (SPPPMPNSPPPSS) are compositionally biased toward pro residues. The segment covering 282–291 (PSSSITPSLS) has biased composition (low complexity). Residues 316–336 (VAGVVTAGAFFLALFAGVIIW) traverse the membrane as a helical segment. At 337-711 (VYSKKIKYTR…IFIVGKDRSV (375 aa)) the chain is on the cytoplasmic side. The 283-residue stretch at 374–656 (FSSSRVIGNG…LVGEADVPEV (283 aa)) folds into the Protein kinase domain. ATP is bound by residues 380 to 388 (IGNGAFGTV) and Lys-403. Residue Asp-497 is the Proton acceptor of the active site.

It in the C-terminal section; belongs to the protein kinase superfamily. Ser/Thr protein kinase family. This sequence in the N-terminal section; belongs to the leguminous lectin family.

The protein resides in the cell membrane. The enzyme catalyses L-seryl-[protein] + ATP = O-phospho-L-seryl-[protein] + ADP + H(+). The catalysed reaction is L-threonyl-[protein] + ATP = O-phospho-L-threonyl-[protein] + ADP + H(+). In terms of biological role, involved in resistance response to the pathogenic oomycetes Phytophthora infestans and Phytophthora capsici. The protein is L-type lectin-domain containing receptor kinase VIII.2 of Arabidopsis thaliana (Mouse-ear cress).